A 342-amino-acid chain; its full sequence is Terpene cyclase resF (342 aa).

5 consecutive transmembrane segments (helical) span residues 5–25, 81–101, 115–135, 151–171, and 182–202; these read VSVVFVSLIIAAAVGVWGVFA, FMAQLLANVFAIPIVLLTEDF, WGVFSQLATSAVMCPLYGVCF, STWIVLISVLIGYGAPAMLIF, and IWGVLAFTVYPLYVCLTASLL. N224 carries an N-linked (GlcNAc...) asparagine glycan. Helical transmembrane passes span 229 to 249, 269 to 289, and 305 to 325; these read YVVAGIVGVAGHLSYIGFHLG, FLQIDYVITFAAMLTLAWHEL, and YLLLGWLFIGPGATLAAAWAL.

The protein belongs to the membrane-bound ascI terpene cyclase family.

It is found in the membrane. It participates in antifungal biosynthesis. Cyclase; part of the gene cluster that mediates the biosynthesis of the tetrahydropyranyl antifungal agent restricticin that acts as an inhibitor of CYP51 and blocks the ergosterol biosynthesis. The highly reducing polyketide synthase resH, the short chain dehydrogenase resG, the cyclase resF, the FAD-dependent monooxygenase resA and the enoylreductase resD are required to generate the first stable intermediate desmethylrestrictinol. ResH with resD biosynthesize the first polyketide chain intermediate that is reduced by resG, followed by epoxidation by resA before 6-endo cyclization via epoxide opening by resF leads to desmethylrestrictinol. The methyltransferase resE then catalyzes the C4 O-methylation of desmethylrestrictinol to produce restrictinol, and the nonribosomal peptide synthetase resC catalyzes the C3 esterification of restrictinol with glycine that leads to restricticin. The chain is Terpene cyclase resF from Aspergillus sclerotiorum.